A 495-amino-acid polypeptide reads, in one-letter code: UDP-N-acetylmuramoyl-L-alanyl-D-glutamate--2,6-diaminopimelate ligase (495 aa).

Residues Leu-27, Ser-29, and His-44–Ala-46 each bind UDP-N-acetyl-alpha-D-muramoyl-L-alanyl-D-glutamate. Gly-116–Thr-122 lines the ATP pocket. UDP-N-acetyl-alpha-D-muramoyl-L-alanyl-D-glutamate is bound by residues Asn-157, Thr-158 to Thr-159, Ser-185, Gln-191, and Arg-193. Lys-225 is subject to N6-carboxylysine. Residues Arg-390, Asp-414–Arg-417, Gly-465, and Glu-469 contribute to the meso-2,6-diaminopimelate site. Positions Asp-414–Arg-417 match the Meso-diaminopimelate recognition motif motif.

Belongs to the MurCDEF family. MurE subfamily. Requires Mg(2+) as cofactor. Post-translationally, carboxylation is probably crucial for Mg(2+) binding and, consequently, for the gamma-phosphate positioning of ATP.

The protein localises to the cytoplasm. It carries out the reaction UDP-N-acetyl-alpha-D-muramoyl-L-alanyl-D-glutamate + meso-2,6-diaminopimelate + ATP = UDP-N-acetyl-alpha-D-muramoyl-L-alanyl-gamma-D-glutamyl-meso-2,6-diaminopimelate + ADP + phosphate + H(+). The protein operates within cell wall biogenesis; peptidoglycan biosynthesis. In terms of biological role, catalyzes the addition of meso-diaminopimelic acid to the nucleotide precursor UDP-N-acetylmuramoyl-L-alanyl-D-glutamate (UMAG) in the biosynthesis of bacterial cell-wall peptidoglycan. The polypeptide is UDP-N-acetylmuramoyl-L-alanyl-D-glutamate--2,6-diaminopimelate ligase (Salmonella choleraesuis (strain SC-B67)).